We begin with the raw amino-acid sequence, 997 residues long: Mannuronan C5-epimerase AlgE2 (997 aa).

PbH1 repeat units follow at residues 133–155 (DRDV…DPHE), 157–179 (TINL…VADF), 180–202 (QIGG…NIVT), 204–226 (TNDF…VVQR), 257–279 (AHDV…RVYG), 280–315 (AEDV…GVSG), and 320–359 (TTGT…SVSN). 10 Hemolysin-type calcium-binding repeats span residues 388–403 (GTAG…AHET), 406–422 (GLDG…NDIL), 424–439 (GGAG…GADL), 557–573 (GHAG…DDIL), 574–591 (VGGA…ADVF), 696–711 (GSAG…ADEV), 713–730 (HGGG…ADVF), 828–839 (GGDGNDTLSGSS), 846–862 (GGVG…NDIL), and 864–880 (GGAG…SDIF).

The protein belongs to the D-mannuronate C5-epimerase family. The cofactor is Ca(2+).

Its subcellular location is the secreted. It carries out the reaction [(1-&gt;4)-beta-D-mannuronosyl](n) = [alginate](n). The protein operates within glycan biosynthesis; alginate biosynthesis. With respect to regulation, inhibited by zinc. Converts beta-D-mannuronic acid (M) to alpha-L-guluronic acid (G), producing a polymer with gel-forming capacity, required for the formation of the cyst coat. In Azotobacter vinelandii, this protein is Mannuronan C5-epimerase AlgE2.